The chain runs to 194 residues: Large ribosomal subunit protein bL9c (194 aa).

The transit peptide at 1-39 directs the protein to the chloroplast; that stretch reads MASSTLSSLSSTPLQHSFAANLKTCSQFPNKSSGFMVFA.

Belongs to the bacterial ribosomal protein bL9 family. In terms of assembly, part of the 50S ribosomal subunit.

Its subcellular location is the plastid. The protein resides in the chloroplast. Its function is as follows. Binds to the 23S rRNA. The chain is Large ribosomal subunit protein bL9c (RPL9) from Pisum sativum (Garden pea).